The following is a 473-amino-acid chain: Ribulose bisphosphate carboxylase large chain (473 aa).

Substrate is bound by residues Asn116 and Thr166. Lys168 (proton acceptor) is an active-site residue. Lys170 contributes to the substrate binding site. Lys194, Asp196, and Glu197 together coordinate Mg(2+). Lys194 carries the N6-carboxylysine modification. The active-site Proton acceptor is His287. Substrate is bound by residues Arg288, His320, and Ser372.

Belongs to the RuBisCO large chain family. Type I subfamily. As to quaternary structure, heterohexadecamer of 8 large chains and 8 small chains. The cofactor is Mg(2+).

It catalyses the reaction 2 (2R)-3-phosphoglycerate + 2 H(+) = D-ribulose 1,5-bisphosphate + CO2 + H2O. It carries out the reaction D-ribulose 1,5-bisphosphate + O2 = 2-phosphoglycolate + (2R)-3-phosphoglycerate + 2 H(+). Functionally, ruBisCO catalyzes two reactions: the carboxylation of D-ribulose 1,5-bisphosphate, the primary event in carbon dioxide fixation, as well as the oxidative fragmentation of the pentose substrate. Both reactions occur simultaneously and in competition at the same active site. This chain is Ribulose bisphosphate carboxylase large chain, found in Nitrosospira sp. (strain TCH716).